Consider the following 354-residue polypeptide: UDP-N-acetylglucosamine--N-acetylmuramyl-(pentapeptide) pyrophosphoryl-undecaprenol N-acetylglucosamine transferase (354 aa).

UDP-N-acetyl-alpha-D-glucosamine is bound by residues 15–17, Asn-127, Arg-163, Ser-191, Ile-244, 263–268, and Gln-288; these read TGG and ALTVSE.

This sequence belongs to the glycosyltransferase 28 family. MurG subfamily.

The protein resides in the cell inner membrane. It catalyses the reaction di-trans,octa-cis-undecaprenyl diphospho-N-acetyl-alpha-D-muramoyl-L-alanyl-D-glutamyl-meso-2,6-diaminopimeloyl-D-alanyl-D-alanine + UDP-N-acetyl-alpha-D-glucosamine = di-trans,octa-cis-undecaprenyl diphospho-[N-acetyl-alpha-D-glucosaminyl-(1-&gt;4)]-N-acetyl-alpha-D-muramoyl-L-alanyl-D-glutamyl-meso-2,6-diaminopimeloyl-D-alanyl-D-alanine + UDP + H(+). It functions in the pathway cell wall biogenesis; peptidoglycan biosynthesis. In terms of biological role, cell wall formation. Catalyzes the transfer of a GlcNAc subunit on undecaprenyl-pyrophosphoryl-MurNAc-pentapeptide (lipid intermediate I) to form undecaprenyl-pyrophosphoryl-MurNAc-(pentapeptide)GlcNAc (lipid intermediate II). The sequence is that of UDP-N-acetylglucosamine--N-acetylmuramyl-(pentapeptide) pyrophosphoryl-undecaprenol N-acetylglucosamine transferase from Aliivibrio fischeri (strain MJ11) (Vibrio fischeri).